We begin with the raw amino-acid sequence, 743 residues long: 1,4-alpha-glucan branching enzyme GlgB (743 aa).

Residue aspartate 416 is the Nucleophile of the active site. The active-site Proton donor is glutamate 469.

Belongs to the glycosyl hydrolase 13 family. GlgB subfamily. As to quaternary structure, monomer.

It catalyses the reaction Transfers a segment of a (1-&gt;4)-alpha-D-glucan chain to a primary hydroxy group in a similar glucan chain.. Its pathway is glycan biosynthesis; glycogen biosynthesis. In terms of biological role, catalyzes the formation of the alpha-1,6-glucosidic linkages in glycogen by scission of a 1,4-alpha-linked oligosaccharide from growing alpha-1,4-glucan chains and the subsequent attachment of the oligosaccharide to the alpha-1,6 position. The protein is 1,4-alpha-glucan branching enzyme GlgB of Shewanella baltica (strain OS155 / ATCC BAA-1091).